The primary structure comprises 263 residues: MVALRLIPCLDVAKGRVVKGVNFVGLRDAGDPVELACRYSEAGADELVFLDIAASHEGRATLVDLVRRTAASVTIPFTVGGGIASVEGITELLRAGADKVSLNSSAVRRPELVSEGAERFGCQCIVVAIDARRRPGGGWDVYVKGGRENTGLDAVDWARRVAALGAGEILLTSMDGDGTQAGYDLALTRAVAQAVAVPVIASGGAGCMDHIAAALDSGPEGGQASAALLASLLHDGVLSVEQIKLDLQGRGLLIRPLEPESES.

Active-site residues include Asp11 and Asp130.

This sequence belongs to the HisA/HisF family. In terms of assembly, heterodimer of HisH and HisF.

Its subcellular location is the cytoplasm. It carries out the reaction 5-[(5-phospho-1-deoxy-D-ribulos-1-ylimino)methylamino]-1-(5-phospho-beta-D-ribosyl)imidazole-4-carboxamide + L-glutamine = D-erythro-1-(imidazol-4-yl)glycerol 3-phosphate + 5-amino-1-(5-phospho-beta-D-ribosyl)imidazole-4-carboxamide + L-glutamate + H(+). The protein operates within amino-acid biosynthesis; L-histidine biosynthesis; L-histidine from 5-phospho-alpha-D-ribose 1-diphosphate: step 5/9. Functionally, IGPS catalyzes the conversion of PRFAR and glutamine to IGP, AICAR and glutamate. The HisF subunit catalyzes the cyclization activity that produces IGP and AICAR from PRFAR using the ammonia provided by the HisH subunit. The chain is Imidazole glycerol phosphate synthase subunit HisF from Synechococcus sp. (strain CC9311).